Consider the following 296-residue polypeptide: Ribosomal protein L11 methyltransferase (296 aa).

Positions 139, 163, 185, and 232 each coordinate S-adenosyl-L-methionine.

This sequence belongs to the methyltransferase superfamily. PrmA family.

It localises to the cytoplasm. The enzyme catalyses L-lysyl-[protein] + 3 S-adenosyl-L-methionine = N(6),N(6),N(6)-trimethyl-L-lysyl-[protein] + 3 S-adenosyl-L-homocysteine + 3 H(+). Methylates ribosomal protein L11. This Rippkaea orientalis (strain PCC 8801 / RF-1) (Cyanothece sp. (strain PCC 8801)) protein is Ribosomal protein L11 methyltransferase.